The sequence spans 503 residues: ATP synthase subunit beta (503 aa).

157–164 (GGAGVGKT) is a binding site for ATP.

Belongs to the ATPase alpha/beta chains family. In terms of assembly, F-type ATPases have 2 components, CF(1) - the catalytic core - and CF(0) - the membrane proton channel. CF(1) has five subunits: alpha(3), beta(3), gamma(1), delta(1), epsilon(1). CF(0) has three main subunits: a(1), b(2) and c(9-12). The alpha and beta chains form an alternating ring which encloses part of the gamma chain. CF(1) is attached to CF(0) by a central stalk formed by the gamma and epsilon chains, while a peripheral stalk is formed by the delta and b chains.

The protein localises to the cell membrane. The catalysed reaction is ATP + H2O + 4 H(+)(in) = ADP + phosphate + 5 H(+)(out). Functionally, produces ATP from ADP in the presence of a proton gradient across the membrane. The catalytic sites are hosted primarily by the beta subunits. This chain is ATP synthase subunit beta, found in Christiangramia forsetii (strain DSM 17595 / CGMCC 1.15422 / KT0803) (Gramella forsetii).